We begin with the raw amino-acid sequence, 263 residues long: Phosphatidylserine decarboxylase proenzyme (263 aa).

Active-site charge relay system; for autoendoproteolytic cleavage activity residues include aspartate 90, histidine 146, and serine 230. The active-site Schiff-base intermediate with substrate; via pyruvic acid; for decarboxylase activity is the serine 230. Residue serine 230 is modified to Pyruvic acid (Ser); by autocatalysis.

This sequence belongs to the phosphatidylserine decarboxylase family. PSD-B subfamily. Prokaryotic type I sub-subfamily. Heterodimer of a large membrane-associated beta subunit and a small pyruvoyl-containing alpha subunit. It depends on pyruvate as a cofactor. Is synthesized initially as an inactive proenzyme. Formation of the active enzyme involves a self-maturation process in which the active site pyruvoyl group is generated from an internal serine residue via an autocatalytic post-translational modification. Two non-identical subunits are generated from the proenzyme in this reaction, and the pyruvate is formed at the N-terminus of the alpha chain, which is derived from the carboxyl end of the proenzyme. The autoendoproteolytic cleavage occurs by a canonical serine protease mechanism, in which the side chain hydroxyl group of the serine supplies its oxygen atom to form the C-terminus of the beta chain, while the remainder of the serine residue undergoes an oxidative deamination to produce ammonia and the pyruvoyl prosthetic group on the alpha chain. During this reaction, the Ser that is part of the protease active site of the proenzyme becomes the pyruvoyl prosthetic group, which constitutes an essential element of the active site of the mature decarboxylase.

The protein localises to the cell membrane. It carries out the reaction a 1,2-diacyl-sn-glycero-3-phospho-L-serine + H(+) = a 1,2-diacyl-sn-glycero-3-phosphoethanolamine + CO2. The protein operates within phospholipid metabolism; phosphatidylethanolamine biosynthesis; phosphatidylethanolamine from CDP-diacylglycerol: step 2/2. Catalyzes the formation of phosphatidylethanolamine (PtdEtn) from phosphatidylserine (PtdSer). The polypeptide is Phosphatidylserine decarboxylase proenzyme (Bacillus subtilis (strain 168)).